Here is a 105-residue protein sequence, read N- to C-terminus: Integration host factor subunit beta (105 aa).

It belongs to the bacterial histone-like protein family. As to quaternary structure, heterodimer of an alpha and a beta chain.

In terms of biological role, this protein is one of the two subunits of integration host factor, a specific DNA-binding protein that functions in genetic recombination as well as in transcriptional and translational control. This is Integration host factor subunit beta from Bradyrhizobium sp. (strain ORS 278).